Reading from the N-terminus, the 959-residue chain is Probable transport protein MmpL4 (959 aa).

11 helical membrane-spanning segments follow: residues 25–45 (FAVP…VFIP), 205–225 (VIVI…VILL), 239–259 (VVAL…VNLL), 300–320 (FHVI…LSFA), 333–353 (AVGM…VLTV), 381–401 (WPLP…LALP), 766–786 (WDLV…MLII), 790–810 (FVAA…SFGL), 818–838 (ILGI…LLAV), 872–892 (VVTN…VSDL), and 902–922 (IGLG…PSIA).

It belongs to the resistance-nodulation-cell division (RND) (TC 2.A.6) family. MmpL subfamily.

It localises to the cell membrane. This is Probable transport protein MmpL4 (mmpL4) from Mycobacterium leprae (strain TN).